The chain runs to 383 residues: Multidrug resistance protein MexA (383 aa).

Residues 1 to 23 (MQRTPAMRVLVPALLVAISALSG) form the signal peptide. Cys-24 carries the N-palmitoyl cysteine lipid modification. A lipid anchor (S-diacylglycerol cysteine) is attached at Cys-24. The stretch at 97–151 (ATYEADYQSAQANLASTQEQAQRYKLLVADQAVSKQQYADANAAYLQSKAAVEQA) forms a coiled coil.

It belongs to the membrane fusion protein (MFP) (TC 8.A.1) family. In terms of assembly, component of the MexAB-OprM multidrug efflux complex, composed of six MexA subunits forming a hexameric tube, binding to a MexB trimer, which interact with the trimeric OprM outer membrane channel protein. OprM is thought to not directly contact MexB; instead, MexA joins MexB and OprM by forming a funnel-like hexamer anchored to the inner membrane. MexA may initially form a hexameric ring complex with MexB prior to OprM, then OprM undergoes a conformational change as it contacts MexA, allowing the periplasmic gate to open. It is thought that, under high intracellular substrate concentration, MexB ejects substrate into the tunnel formed by MexA-OprM; as the substrate level declines, conformational changes in MexB cause efflux to reduce and stop and the complex shifts to the closed state. MexB subunit acts as a substrate:proton antiporter and activity is enhanced significantly when in complex with MexA and OprM, in vitro.

The protein localises to the cell inner membrane. With respect to regulation, export of antibiotics and solvents is dramatically decreased in the presence of the protonophore carbonyl cyanide m-chlorophenylhydrazone (CCCP), therefore may be driven by a proton gradient. Antibiotic efflux is inhibited by pyridopyrimidine derivatives, such as ABI-PP, acting by binding to a hydrophobic pocket in MexB. The periplasmic linker component of the MexAB-OprM efflux system that confers multidrug resistance. Functions as the major efflux pump for n-hexane and p-xylene efflux. Has been shown in one study to be involved in the active efflux of the autoinducer N-(3-oxododecanoyl) homoserine lactone, thereby playing an indirect role in quorum-sensing; but has been shown in another study not to be involved in efflux of this autoinducer. Over-expression of the pump increases antibiotic and solvent efflux capacities. Implicated in the secretion of the siderophore pyoverdine. The polypeptide is Multidrug resistance protein MexA (mexA) (Pseudomonas aeruginosa (strain ATCC 15692 / DSM 22644 / CIP 104116 / JCM 14847 / LMG 12228 / 1C / PRS 101 / PAO1)).